A 279-amino-acid polypeptide reads, in one-letter code: Coiled-coil domain-containing protein 117 (279 aa).

Positions 1 to 82 (MAALGRPFSG…REEEEDDDCP (82 aa)) are disordered. The residue at position 48 (Arg48) is an Omega-N-methylarginine. A Phosphoserine modification is found at Ser53. A compositionally biased stretch (basic residues) spans 63 to 72 (VSVHCKKKHK). Residues 141-168 (QCEVARRKLQEIEDRIIDEDEEVEADRN) adopt a coiled-coil conformation. The disordered stretch occupies residues 217–279 (LLSDKPKPSS…ATSTEEEMEL (63 aa)). Polar residues-rich tracts occupy residues 224-235 (PSSNTKNYTGES) and 262-272 (SLYNSLETATS).

Interacts with CIAO2B; the interaction is direct. Interacts with MMS19; the interaction is indirect.

Its subcellular location is the cytoplasm. The protein localises to the cytoskeleton. It localises to the spindle. It is found in the nucleus. In terms of biological role, facilitates DNA repair, cell cycle progression, and cell proliferation through its interaction with CIAO2B. The protein is Coiled-coil domain-containing protein 117 of Homo sapiens (Human).